The chain runs to 198 residues: NAD(P)H-quinone oxidoreductase chain 6 (198 aa).

Helical transmembrane passes span 9–29 (YISFLILAFLVIGAALGVVLL), 32–52 (IVYSAFLLGGVFLSISGIYIL), 61–81 (AQVLVYVGAVSVLILFAIMLV), 100–120 (TALVCTGIFALLSTMVLITPW), and 145–165 (LLPFELASVLLLMAMVGAIIL).

This sequence belongs to the complex I subunit 6 family.

The protein localises to the membrane. The enzyme catalyses a plastoquinone + NADH + (n+1) H(+)(in) = a plastoquinol + NAD(+) + n H(+)(out). The catalysed reaction is a plastoquinone + NADPH + (n+1) H(+)(in) = a plastoquinol + NADP(+) + n H(+)(out). Its function is as follows. NDH-1 shuttles electrons from NAD(P)H, via FMN and iron-sulfur (Fe-S) centers, to quinones in the respiratory chain. The immediate electron acceptor for the enzyme in this species is believed to be plastoquinone. Couples the redox reaction to proton translocation (for every two electrons transferred, four hydrogen ions are translocated across the cytoplasmic membrane), and thus conserves the redox energy in a proton gradient. The polypeptide is NAD(P)H-quinone oxidoreductase chain 6 (ndhG) (Synechocystis sp. (strain ATCC 27184 / PCC 6803 / Kazusa)).